Consider the following 621-residue polypeptide: uncharacterized protein (621 aa).

It is found in the plastid. The protein resides in the chloroplast. This is an uncharacterized protein from Porphyra purpurea (Red seaweed).